The sequence spans 168 residues: Photosystem I assembly protein Ycf3 (168 aa).

3 TPR repeats span residues 35–68 (AFTY…EIDP), 72–105 (SYIL…NPFL), and 120–153 (GEQA…TPGN).

The protein belongs to the Ycf3 family.

It is found in the plastid. The protein resides in the chloroplast thylakoid membrane. Essential for the assembly of the photosystem I (PSI) complex. May act as a chaperone-like factor to guide the assembly of the PSI subunits. This Buxus microphylla (Littleleaf boxwood) protein is Photosystem I assembly protein Ycf3.